Consider the following 215-residue polypeptide: MLTKAEALAHTVIYRKNSRFDKVKEKSEELTLIGKGRSAYVFALTEGGRKMALKVFFPEYQATAVKEAAIYEKLAGSAFYPDIYETGDSFILMEYIKGETFYNCLKKGIAISDDMIQQVEEALSDARAAGLNPSDIHLRNLILTETGAVRVIDVARFEQTKTCTQWDDLKSAYHALYKKPIFPKKIPGFWLEIIAFLYKKDWFQKHFAQRKRKYS.

Positions 27–215 constitute a Protein kinase domain; it reads SEELTLIGKG…HFAQRKRKYS (189 aa). ATP contacts are provided by residues 33–41 and K54; that span reads IGKGRSAYV. Catalysis depends on D135, which acts as the Proton acceptor.

The protein belongs to the protein kinase superfamily. Ser/Thr protein kinase family.

It carries out the reaction L-seryl-[protein] + ATP = O-phospho-L-seryl-[protein] + ADP + H(+). It catalyses the reaction L-threonyl-[protein] + ATP = O-phospho-L-threonyl-[protein] + ADP + H(+). In Bacillus subtilis (strain 168), this protein is Putative serine/threonine-protein kinase YrzF (yrzF).